The chain runs to 292 residues: ATP synthase gamma chain (292 aa).

This sequence belongs to the ATPase gamma chain family. F-type ATPases have 2 components, CF(1) - the catalytic core - and CF(0) - the membrane proton channel. CF(1) has five subunits: alpha(3), beta(3), gamma(1), delta(1), epsilon(1). CF(0) has three main subunits: a, b and c.

The protein localises to the cell inner membrane. Produces ATP from ADP in the presence of a proton gradient across the membrane. The gamma chain is believed to be important in regulating ATPase activity and the flow of protons through the CF(0) complex. In Methylobacterium nodulans (strain LMG 21967 / CNCM I-2342 / ORS 2060), this protein is ATP synthase gamma chain.